The chain runs to 131 residues: Large ribosomal subunit protein bL17 (131 aa).

This sequence belongs to the bacterial ribosomal protein bL17 family. In terms of assembly, part of the 50S ribosomal subunit. Contacts protein L32.

The protein is Large ribosomal subunit protein bL17 of Shewanella baltica (strain OS223).